The following is a 267-amino-acid chain: Glutamate 5-kinase (267 aa).

K14 serves as a coordination point for ATP. S54, D141, and N157 together coordinate substrate. ATP is bound by residues 177 to 178 and 219 to 225; these read SD and TGGMMSK.

Belongs to the glutamate 5-kinase family.

The protein localises to the cytoplasm. It carries out the reaction L-glutamate + ATP = L-glutamyl 5-phosphate + ADP. It functions in the pathway amino-acid biosynthesis; L-proline biosynthesis; L-glutamate 5-semialdehyde from L-glutamate: step 1/2. Its function is as follows. Catalyzes the transfer of a phosphate group to glutamate to form L-glutamate 5-phosphate. In Streptococcus thermophilus (strain CNRZ 1066), this protein is Glutamate 5-kinase.